The primary structure comprises 102 residues: Cytochrome c oxidase subunit 6a, mitochondrial (102 aa).

A mitochondrion-targeting transit peptide spans 1–36 (MATAIVRSALSRAVTRAAPKTSVAPKRNFSSSAGHD).

It belongs to the cytochrome c oxidase subunit 6A (TC 3.D.4.11) family.

It is found in the mitochondrion inner membrane. Its function is as follows. This protein is one of the nuclear-coded polypeptide chains of cytochrome c oxidase, the terminal oxidase in mitochondrial electron transport. The sequence is that of Cytochrome c oxidase subunit 6a, mitochondrial (COX6A) from Arabidopsis thaliana (Mouse-ear cress).